The sequence spans 155 residues: Ribosomal RNA large subunit methyltransferase H (155 aa).

Residues leucine 72, glycine 103, and 122 to 127 (LSDLTL) each bind S-adenosyl-L-methionine.

Belongs to the RNA methyltransferase RlmH family. In terms of assembly, homodimer.

The protein localises to the cytoplasm. The enzyme catalyses pseudouridine(1915) in 23S rRNA + S-adenosyl-L-methionine = N(3)-methylpseudouridine(1915) in 23S rRNA + S-adenosyl-L-homocysteine + H(+). Functionally, specifically methylates the pseudouridine at position 1915 (m3Psi1915) in 23S rRNA. The polypeptide is Ribosomal RNA large subunit methyltransferase H (Albidiferax ferrireducens (strain ATCC BAA-621 / DSM 15236 / T118) (Rhodoferax ferrireducens)).